The sequence spans 136 residues: uncharacterized protein (136 aa).

This is an uncharacterized protein from Pseudomonas amygdali pv. tabaci (Pseudomonas syringae pv. tabaci).